A 927-amino-acid polypeptide reads, in one-letter code: Perchlorate reductase subunit alpha (927 aa).

The tat-type signal signal peptide spans 1 to 31 (MVQMTRRGFLLASGATLLGSSLSFRTLAAAA). The 4Fe-4S Mo/W bis-MGD-type domain occupies 53–116 (DKKTRGAHLI…CAHDYMYGPH (64 aa)). [4Fe-4S] cluster-binding residues include H60, C64, C68, and C102. D198 contacts Mo-bis(molybdopterin guanine dinucleotide).

This sequence belongs to the prokaryotic molybdopterin-containing oxidoreductase family. Heterotrimer of alpha, beta and gamma subunits. [4Fe-4S] cluster is required as a cofactor. The cofactor is Mo-bis(molybdopterin guanine dinucleotide). Post-translationally, predicted to be exported by the Tat system. The position of the signal peptide cleavage has not been experimentally proven.

The protein resides in the periplasm. Functionally, component of the perchlorate reductase that catalyzes the reduction of perchlorate to chlorite and allows anaerobic growth on perchlorate as the sole electron acceptor. Is probably also able to reduce chlorate to chlorite. The alpha subunit is likely the catalytic subunit. In Dechloromonas aromatica (strain RCB), this protein is Perchlorate reductase subunit alpha (pcrA).